A 285-amino-acid chain; its full sequence is Probable methyltransferase ltbC (285 aa).

A disordered region spans residues 1-22 (MASTGQTNNYKQGYSSQTVETQ).

This sequence belongs to the class I-like SAM-binding methyltransferase superfamily. In terms of assembly, monomer.

In terms of biological role, probable methyltransferase; part of the gene cluster that mediates the biosynthesis of luteodienoside A, a glycosylated polyketide consisting of an unusual 1-O-beta-D-glucopyranosyl-myo-inositol (glucinol) ester of 3-hydroxy-2,2,4-trimethylocta-4,6-dienoic acid. The HR-PKS ltbA produces the trimethylated polyketide chain from acetyl-CoA, malonyl-CoA and S-adenosylmethionine (SAM), and the ltbA cAT domain then uses glucinol produced by the glycosyltransferase ltbB as an offloading substrate to release luteodienoside A. Since ltbA and ltbB are sufficient for the biosynthesis of luteodienoside A, the functions of the methyltransferase ltbC and the FAD-binding monooxygenase ltbD within the pathway remain obscur. This chain is Probable methyltransferase ltbC, found in Aspergillus luteorubrus.